Consider the following 479-residue polypeptide: Glutamate--tRNA ligase (479 aa).

Positions 21 to 31 match the 'HIGH' region motif; the sequence is PSPTGYLHVGG. Residues 248 to 252 carry the 'KMSKS' region motif; the sequence is KLSKR. Lys-251 contacts ATP.

Belongs to the class-I aminoacyl-tRNA synthetase family. Glutamate--tRNA ligase type 1 subfamily. As to quaternary structure, monomer.

It localises to the cytoplasm. It carries out the reaction tRNA(Glu) + L-glutamate + ATP = L-glutamyl-tRNA(Glu) + AMP + diphosphate. Functionally, catalyzes the attachment of glutamate to tRNA(Glu) in a two-step reaction: glutamate is first activated by ATP to form Glu-AMP and then transferred to the acceptor end of tRNA(Glu). The sequence is that of Glutamate--tRNA ligase from Actinobacillus pleuropneumoniae serotype 5b (strain L20).